A 590-amino-acid chain; its full sequence is Regulatory solute carrier protein family 1 member 1 (590 aa).

4 disordered regions span residues 1–116 (MSSS…TQGL), 144–234 (EEGW…PDSE), 277–331 (SPSS…AEES), and 359–466 (EEVT…SHRT). Polar residues predominate over residues 16–35 (SSGQSPEAGNPTSLARSVSA). Positions 78–91 (SPCAAAAAPSSAMP) are enriched in low complexity. A compositionally biased stretch (polar residues) spans 150-161 (ENQNPSQVNDLQ). Basic and acidic residues-rich tracts occupy residues 162-179 (QHQEPENARHEAGPRDAP) and 188-203 (PGERQQKHEVADREAT). Over residues 313–331 (SSSSVCGSSQPPAESAEES) the composition is skewed to low complexity. Residues 362 to 376 (TCQSEGTAWGQTRVN) show a composition bias toward polar residues. Basic and acidic residues-rich tracts occupy residues 380-395 (RWTESERRTQDEDRPQ) and 404-420 (VKTEKLTDASPDTRIED). Polar residues predominate over residues 451-465 (SVTVTSAETSNQSHR). The region spanning 544 to 584 (GFPAADIDRILRAGFTLQEALGALHRVGGNADLALLVLLAK) is the UBA domain.

In terms of assembly, interacts with YRDC. In terms of tissue distribution, highly expressed in renal outer medulla, renal inner medulla, duodenum, ileum and jejunum. Moderately expressed in renal outer cortex, renal papilla, brain and liver.

It localises to the cell membrane. The protein localises to the nucleus. Its subcellular location is the golgi apparatus. The protein resides in the trans-Golgi network. Its function is as follows. Mediates transcriptional and post-transcriptional regulation of SLC5A1. Inhibits a dynamin and PKC-dependent exocytotic pathway of SLC5A1. Also involved in transcriptional regulation of SLC22A2. Exhibits glucose-dependent, short-term inhibition of SLC5A1 and SLC22A2 by inhibiting the release of vesicles from the trans-Golgi network. The sequence is that of Regulatory solute carrier protein family 1 member 1 (RSC1A1) from Oryctolagus cuniculus (Rabbit).